A 129-amino-acid polypeptide reads, in one-letter code: Glycine cleavage system H protein (129 aa).

The region spanning 24-106 (SYTVGISEHA…FGDGWFFRVM (83 aa)) is the Lipoyl-binding domain. N6-lipoyllysine is present on K65.

The protein belongs to the GcvH family. As to quaternary structure, the glycine cleavage system is composed of four proteins: P, T, L and H. (R)-lipoate is required as a cofactor.

Its function is as follows. The glycine cleavage system catalyzes the degradation of glycine. The H protein shuttles the methylamine group of glycine from the P protein to the T protein. This is Glycine cleavage system H protein from Shewanella sediminis (strain HAW-EB3).